The primary structure comprises 787 residues: MPSQDSDFPQKEHEKMTEFQEAVTFKDVAVVFTEEELGLLDSAQRKLYQDVMVENFRNLVSVGHVPFKADMVSQLETEEKLWTMERETQRNGHSSEIHSAVTSGSKIPNEMETLGKVMFKYLSCEELSCWQIWKHTTNDLTLQRKSSWFLHGDSLQVSEDENHIMNHKGDHFGCLENQEFLIPTAQASCGSRCLSESENPSRGKQMSVKNHLHVCEGFTKNSPLSDPGKTDAKQTPCKGERPHPCRVCGEGFSHGAVLPVHQVDPGEKCSHLQTHQRIHPGGTVNKCPKSGDGFHQNSFHPHHSNPTGEKSYRCDSCGKAFGSSTGLIIHYRTHTGEKPYRCEACGKCFSQSSNFQCHQRVHTEEKPYKCEECGKGFGWSVNLRVHQRVHRGEKPYKCEECGKGFTQAAHYHIHQRVHTGEKPYKCDVCGKGFSHNSPLICHRRVHTGEKPYRCEACGKGFTRNTDLHIHFRVHTGEKPYTCKECGKGFSQASNLQVHQNVHTGEKRFKCETCGKGFSQSSKLQTHQRVHTGEKPYRCDVCGKDFSYSSNLKLHQVIHTGEKPYTCEACGKGFSWRSNLHAHQRVHSGEKPYKCEACDKSFSQAIDFRVHQRVHTGEKPYKCGVCGKGFSQSSGLQSHQRVHTGEKPYKCDVCGKGFRYSSQFIYHQRGHTGEKPYKCEECGKGFGRSLNLRHHQRVHTGEKPHKCEECGKAFSLPSNLRVHLSVHTREKLFKCEDCGKGFSQSSRLQAHQRVHTGEKPYKCNICGKDFSHRSRLTYHQKVHTGKNL.

One can recognise a KRAB domain in the interval valine 23–serine 94. C2H2-type zinc fingers lie at residues histidine 243–histidine 275, tyrosine 312–histidine 334, tyrosine 340–histidine 362, tyrosine 368–histidine 390, tyrosine 396–histidine 418, tyrosine 424–histidine 446, tyrosine 452–histidine 474, tyrosine 480–histidine 502, phenylalanine 508–histidine 530, tyrosine 536–histidine 558, tyrosine 564–histidine 586, tyrosine 592–histidine 614, tyrosine 620–histidine 642, tyrosine 648–histidine 670, tyrosine 676–histidine 698, histidine 704–histidine 726, phenylalanine 732–histidine 754, and tyrosine 760–histidine 782.

It belongs to the krueppel C2H2-type zinc-finger protein family.

The protein localises to the nucleus. Its function is as follows. May be involved in transcriptional regulation. In Bos taurus (Bovine), this protein is Zinc finger protein 227 (ZNF227).